Here is a 426-residue protein sequence, read N- to C-terminus: 3-phosphoshikimate 1-carboxyvinyltransferase (426 aa).

3 residues coordinate 3-phosphoshikimate: Lys21, Ser22, and Arg26. Lys21 is a binding site for phosphoenolpyruvate. Residues Gly93 and Arg121 each contribute to the phosphoenolpyruvate site. Ser165, Gln167, Asp313, and Lys340 together coordinate 3-phosphoshikimate. A phosphoenolpyruvate-binding site is contributed by Gln167. The Proton acceptor role is filled by Asp313. Residues Arg344 and Arg386 each coordinate phosphoenolpyruvate.

The protein belongs to the EPSP synthase family. As to quaternary structure, monomer.

It is found in the cytoplasm. The enzyme catalyses 3-phosphoshikimate + phosphoenolpyruvate = 5-O-(1-carboxyvinyl)-3-phosphoshikimate + phosphate. It participates in metabolic intermediate biosynthesis; chorismate biosynthesis; chorismate from D-erythrose 4-phosphate and phosphoenolpyruvate: step 6/7. In terms of biological role, catalyzes the transfer of the enolpyruvyl moiety of phosphoenolpyruvate (PEP) to the 5-hydroxyl of shikimate-3-phosphate (S3P) to produce enolpyruvyl shikimate-3-phosphate and inorganic phosphate. This Solibacter usitatus (strain Ellin6076) protein is 3-phosphoshikimate 1-carboxyvinyltransferase.